The sequence spans 110 residues: Nucleoid-associated protein CbuK_1603 (110 aa).

The protein belongs to the YbaB/EbfC family. As to quaternary structure, homodimer.

It localises to the cytoplasm. Its subcellular location is the nucleoid. In terms of biological role, binds to DNA and alters its conformation. May be involved in regulation of gene expression, nucleoid organization and DNA protection. This chain is Nucleoid-associated protein CbuK_1603, found in Coxiella burnetii (strain CbuK_Q154) (Coxiella burnetii (strain Q154)).